The sequence spans 238 residues: Photosynthetic NDH subunit of lumenal location 1, chloroplastic (238 aa).

This sequence belongs to the PsbP family. Part of the chloroplast NDH complex, composed of a mixture of chloroplast and nucleus encoded subunits. Component of the NDH lumenal subcomplex, at least composed of PnsL1, PnsL2, PnsL3, PnsL4 and PnsL5.

It is found in the plastid. Its subcellular location is the chloroplast thylakoid membrane. Functionally, NDH shuttles electrons from NAD(P)H:plastoquinone, via FMN and iron-sulfur (Fe-S) centers, to quinones in the photosynthetic chain and possibly in a chloroplast respiratory chain. The immediate electron acceptor for the enzyme in this species is believed to be plastoquinone. Couples the redox reaction to proton translocation, and thus conserves the redox energy in a proton gradient. Required for accumulation of the chloroplast NAD(P)H dehydrogenase (NDH) complex. The polypeptide is Photosynthetic NDH subunit of lumenal location 1, chloroplastic (Arabidopsis thaliana (Mouse-ear cress)).